Consider the following 1081-residue polypeptide: Histone demethylase-like protein A (1081 aa).

Residues 37-173 (QHLQHPSLPN…LSGNTDYARY (137 aa)) form a disordered region. Positions 66 to 81 (SPSCNESNESNGETSS) are enriched in low complexity. Residues 119–132 (DTSNILSGSATSVS) show a composition bias toward polar residues. The segment covering 141 to 161 (NSTPPSTVNNVPSSSSITSDS) has biased composition (low complexity). Residues 192–287 (CVTAAYACRL…FGCVEIPPAL (96 aa)) form the SWIRM domain. A disordered region spans residues 902 to 940 (ATAQKKKEPPCSNGFSAPVSTSAHPTDASAPARSNNSFS). Residues 914–925 (NGFSAPVSTSAH) are compositionally biased toward polar residues. A DNA-binding region (HMG box) is located at residues 969–1049 (ARTGLNPFLL…TNTEIWDRWK (81 aa)).

Belongs to the flavin monoamine oxidase family.

It localises to the nucleus. Its function is as follows. H3K4 demethylase-like protein. Might not act as a H3K4 demethylase or is not the major H3K4 demethylase since its deletion does not affect whole genome H3K4 methylation. The protein is Histone demethylase-like protein A of Aspergillus fumigatus (strain ATCC MYA-4609 / CBS 101355 / FGSC A1100 / Af293) (Neosartorya fumigata).